A 560-amino-acid chain; its full sequence is Excitatory amino acid transporter 5 (560 aa).

The Cytoplasmic portion of the chain corresponds to 1 to 16 (MVPHAILARGRDVCRR). 3 helical membrane-spanning segments follow: residues 17–37 (NGLL…GFFL), 60–80 (MLKM…LASL), and 94–114 (AYYL…VSII). The Extracellular portion of the chain corresponds to 115–216 (HPGSAAQKET…EVVYKSEPGT (102 aa)). The N-linked (GlcNAc...) asparagine glycan is linked to asparagine 191. A run of 7 helical transmembrane segments spans residues 217 to 237 (SDGM…IMLG), 260 to 280 (IVAV…AGKI), 300 to 320 (VVCG…FFIT), 330 to 350 (GILQ…TLPI), 372 to 392 (VGAT…AIFI), 414 to 434 (AASI…VIVL), and 457 to 477 (FRTM…AHIC).

This sequence belongs to the dicarboxylate/amino acid:cation symporter (DAACS) (TC 2.A.23) family. SLC1A7 subfamily. Interacts with the PDZ domains of DLG4. In terms of tissue distribution, expressed primarily in retina. Detectable in liver, heart, muscle and brain.

The protein resides in the photoreceptor inner segment membrane. It is found in the synaptic cell membrane. It carries out the reaction K(+)(in) + L-glutamate(out) + 3 Na(+)(out) + H(+)(out) = K(+)(out) + L-glutamate(in) + 3 Na(+)(in) + H(+)(in). The enzyme catalyses K(+)(in) + L-aspartate(out) + 3 Na(+)(out) + H(+)(out) = K(+)(out) + L-aspartate(in) + 3 Na(+)(in) + H(+)(in). It catalyses the reaction D-aspartate(out) + K(+)(in) + 3 Na(+)(out) + H(+)(out) = D-aspartate(in) + K(+)(out) + 3 Na(+)(in) + H(+)(in). Its function is as follows. Sodium-dependent, high-affinity amino acid transporter that mediates the uptake of L-glutamate and also L-aspartate and D-aspartate. Functions as a symporter that transports one amino acid molecule together with two or three Na(+) ions and one proton, in parallel with the counter-transport of one K(+) ion. Acts primarily as an inhibitory glutamate-gated chloride channel being a major inhibitory presynaptic receptor at mammalian rod bipolar cell axon terminals. Glutamate binding gates a large Cl(-) conductance that mediates inhibition, affecting visual processing in the retina. In Homo sapiens (Human), this protein is Excitatory amino acid transporter 5.